Consider the following 313-residue polypeptide: Malate dehydrogenase (313 aa).

NAD(+) is bound by residues 11-16 (GAGNIG) and Asp35. Residues Arg84 and Arg90 each coordinate substrate. Residues Asn97 and 120 to 122 (VTN) contribute to the NAD(+) site. Residues Asn122 and Arg153 each coordinate substrate. The Proton acceptor role is filled by His177.

Belongs to the LDH/MDH superfamily. MDH type 3 family.

The catalysed reaction is (S)-malate + NAD(+) = oxaloacetate + NADH + H(+). Its function is as follows. Catalyzes the reversible oxidation of malate to oxaloacetate. The chain is Malate dehydrogenase from Ehrlichia canis (strain Jake).